Reading from the N-terminus, the 296-residue chain is Ribosomal RNA small subunit methyltransferase H (296 aa).

Residues 38-40 (GAH), Glu-57, Phe-80, Asp-103, and His-110 each bind S-adenosyl-L-methionine.

It belongs to the methyltransferase superfamily. RsmH family.

It localises to the cytoplasm. It catalyses the reaction cytidine(1402) in 16S rRNA + S-adenosyl-L-methionine = N(4)-methylcytidine(1402) in 16S rRNA + S-adenosyl-L-homocysteine + H(+). Functionally, specifically methylates the N4 position of cytidine in position 1402 (C1402) of 16S rRNA. This is Ribosomal RNA small subunit methyltransferase H from Borrelia garinii subsp. bavariensis (strain ATCC BAA-2496 / DSM 23469 / PBi) (Borreliella bavariensis).